Reading from the N-terminus, the 436-residue chain is GTPase Der (436 aa).

EngA-type G domains follow at residues 4 to 167 (PVVA…KDEE) and 176 to 351 (IKLS…ENHK). GTP is bound by residues 10 to 17 (GRPNVGKS), 57 to 61 (DTGGI), 119 to 122 (NKVD), 182 to 189 (GRPNVGKS), 229 to 233 (DTAGM), and 294 to 297 (NKWD). Residues 352–436 (KRVQSSTLNE…PIRIIPRKRN (85 aa)) form the KH-like domain.

It belongs to the TRAFAC class TrmE-Era-EngA-EngB-Septin-like GTPase superfamily. EngA (Der) GTPase family. Associates with the 50S ribosomal subunit.

Functionally, GTPase that plays an essential role in the late steps of ribosome biogenesis. The chain is GTPase Der from Staphylococcus carnosus (strain TM300).